The chain runs to 196 residues: UPF0340 protein TT_C0214 (196 aa).

The protein belongs to the UPF0340 family.

This Thermus thermophilus (strain ATCC BAA-163 / DSM 7039 / HB27) protein is UPF0340 protein TT_C0214.